Reading from the N-terminus, the 397-residue chain is Acetate kinase 2 (397 aa).

Asn-8 is a Mg(2+) binding site. Lys-15 is an ATP binding site. Arg-89 is a binding site for substrate. Asp-146 functions as the Proton donor/acceptor in the catalytic mechanism. ATP is bound by residues His-206–Gly-210, Asp-281–Arg-283, and Gly-329–Asn-333. Mg(2+) is bound at residue Glu-380.

Belongs to the acetokinase family. In terms of assembly, homodimer. The cofactor is Mg(2+). Mn(2+) serves as cofactor.

The protein resides in the cytoplasm. It carries out the reaction acetate + ATP = acetyl phosphate + ADP. It functions in the pathway metabolic intermediate biosynthesis; acetyl-CoA biosynthesis; acetyl-CoA from acetate: step 1/2. Functionally, catalyzes the formation of acetyl phosphate from acetate and ATP. Can also catalyze the reverse reaction. This Listeria monocytogenes serovar 1/2a (strain ATCC BAA-679 / EGD-e) protein is Acetate kinase 2.